A 353-amino-acid chain; its full sequence is Phosphate acyltransferase (353 aa).

This sequence belongs to the PlsX family. Homodimer. Probably interacts with PlsY.

It localises to the cytoplasm. It carries out the reaction a fatty acyl-[ACP] + phosphate = an acyl phosphate + holo-[ACP]. The protein operates within lipid metabolism; phospholipid metabolism. Catalyzes the reversible formation of acyl-phosphate (acyl-PO(4)) from acyl-[acyl-carrier-protein] (acyl-ACP). This enzyme utilizes acyl-ACP as fatty acyl donor, but not acyl-CoA. The sequence is that of Phosphate acyltransferase from Syntrophobacter fumaroxidans (strain DSM 10017 / MPOB).